Reading from the N-terminus, the 475-residue chain is Sulfate adenylyltransferase subunit 1 (475 aa).

The tr-type G domain maps to 25 to 239; the sequence is KSLLRFLTCG…EVLETVEIQR (215 aa). Residues 34 to 41 form a G1 region; it reads GSVDDGKS. A GTP-binding site is contributed by 34 to 41; that stretch reads GSVDDGKS. The tract at residues 92-96 is G2; it reads GITID. Residues 113–116 are G3; that stretch reads DTPG. GTP-binding positions include 113 to 117 and 168 to 171; these read DTPGH and NKMD. The segment at 168–171 is G4; that stretch reads NKMD. Residues 206–208 are G5; the sequence is SAL.

The protein belongs to the TRAFAC class translation factor GTPase superfamily. Classic translation factor GTPase family. CysN/NodQ subfamily. Heterodimer composed of CysD, the smaller subunit, and CysN.

The catalysed reaction is sulfate + ATP + H(+) = adenosine 5'-phosphosulfate + diphosphate. The protein operates within sulfur metabolism; hydrogen sulfide biosynthesis; sulfite from sulfate: step 1/3. In terms of biological role, with CysD forms the ATP sulfurylase (ATPS) that catalyzes the adenylation of sulfate producing adenosine 5'-phosphosulfate (APS) and diphosphate, the first enzymatic step in sulfur assimilation pathway. APS synthesis involves the formation of a high-energy phosphoric-sulfuric acid anhydride bond driven by GTP hydrolysis by CysN coupled to ATP hydrolysis by CysD. The sequence is that of Sulfate adenylyltransferase subunit 1 from Escherichia coli (strain UTI89 / UPEC).